We begin with the raw amino-acid sequence, 367 residues long: Transcription factor aptf-2 (367 aa).

The segment at 29–49 (VPATKETGPSSSAECSTQPAV) is disordered. Positions 36-47 (GPSSSAECSTQP) are enriched in polar residues. An H-S-H (helix-span-helix), dimerization region spans residues 220-354 (AKQKAFPNKV…GVASELRRLT (135 aa)).

The protein belongs to the AP-2 family. As to quaternary structure, binds DNA as a dimer.

It is found in the nucleus. The protein localises to the cytoplasm. Sequence-specific DNA-binding protein that interacts with enhancer elements to regulate transcription of selected genes. Required for neuroblast and epidermal morphogenesis, perhaps acting in cooperation with transcription factor aptf-4. The sequence is that of Transcription factor aptf-2 from Caenorhabditis elegans.